Reading from the N-terminus, the 439-residue chain is tRNA modification GTPase MnmE (439 aa).

Residues R20, E78, and K116 each contribute to the (6S)-5-formyl-5,6,7,8-tetrahydrofolate site. One can recognise a TrmE-type G domain in the interval 211–364 (GIYVTILGEP…LLNLIKQKVE (154 aa)). GTP is bound by residues 221-226 (NSGKST), 240-246 (SEYAGTT), and 265-268 (DTAG). Residues S225 and T246 each contribute to the Mg(2+) site. (6S)-5-formyl-5,6,7,8-tetrahydrofolate is bound at residue K439.

The protein belongs to the TRAFAC class TrmE-Era-EngA-EngB-Septin-like GTPase superfamily. TrmE GTPase family. Homodimer. Heterotetramer of two MnmE and two MnmG subunits. Requires K(+) as cofactor.

Its subcellular location is the cytoplasm. Its function is as follows. Exhibits a very high intrinsic GTPase hydrolysis rate. Involved in the addition of a carboxymethylaminomethyl (cmnm) group at the wobble position (U34) of certain tRNAs, forming tRNA-cmnm(5)s(2)U34. This Ehrlichia chaffeensis (strain ATCC CRL-10679 / Arkansas) protein is tRNA modification GTPase MnmE.